Reading from the N-terminus, the 272-residue chain is Endogenous Bornavirus-like nucleoprotein 2 (272 aa).

A disordered region spans residues 48–70; that stretch reads MSHLRKDSQPSSPGDDAMDRSGL.

May act as an RNA-binding protein. The C-terminal region is highly homologous to the bornavirus nucleocapsid N protein that binds viral RNA and oligomerizes. The viral protein also possesses a nuclear import and a nuclear export signal. These 2 signals seem absent in EBLN-2 supporting an unrelated function in Human. This chain is Endogenous Bornavirus-like nucleoprotein 2 (EBLN2), found in Homo sapiens (Human).